Consider the following 64-residue polypeptide: Conotoxin VnMLCL-042 (64 aa).

Positions 1–19 are cleaved as a signal peptide; it reads MLCLPVFIILLLLASPAAP. A propeptide spanning residues 20 to 43 is cleaved from the precursor; it reads NPLQTRIQSNLIRAGPEDANMKTD. A Methionine amide modification is found at Met63.

This sequence belongs to the conotoxin T superfamily. In terms of tissue distribution, expressed by the venom duct.

It localises to the secreted. This is Conotoxin VnMLCL-042 from Conus ventricosus (Mediterranean cone).